The following is a 70-amino-acid chain: Large ribosomal subunit protein eL24 (70 aa).

Zn(2+)-binding residues include Cys6, Cys9, Cys32, and Cys36. The segment at 6–36 (CSYCGRPIPPGYGIMYVRVDGVVLRFCSRRC) adopts a C4-type zinc-finger fold.

Belongs to the eukaryotic ribosomal protein eL24 family. In terms of assembly, part of the 50S ribosomal subunit. Forms a cluster with proteins L3 and L14. Zn(2+) is required as a cofactor.

Functionally, binds to the 23S rRNA. In Caldivirga maquilingensis (strain ATCC 700844 / DSM 13496 / JCM 10307 / IC-167), this protein is Large ribosomal subunit protein eL24.